The primary structure comprises 250 residues: MLLIPAIDLKDGQCVRLKQGDMDQATIFSEEPAAMARHWVDRGARRLHLVDLNGAFAGKPKNEDAIRAIIEEVGGEIPVQLGGGIRDLNTIERYLDDGLSYVIIGTAAVKNPGFLQDACTAFGGHIIVGLDAKDGKVATDGWSKLTGHEVADLARKFEDYGCESIIYTDIGRDGMLQGINIEATVRLARAVKIPVIASGGLSNLTDIESLCEVEDEGIEGVICGRAIYSGDLDFAAAQTLADRLRESDDA.

Asp-8 acts as the Proton acceptor in catalysis. Catalysis depends on Asp-131, which acts as the Proton donor.

Belongs to the HisA/HisF family.

It is found in the cytoplasm. It carries out the reaction 1-(5-phospho-beta-D-ribosyl)-5-[(5-phospho-beta-D-ribosylamino)methylideneamino]imidazole-4-carboxamide = 5-[(5-phospho-1-deoxy-D-ribulos-1-ylimino)methylamino]-1-(5-phospho-beta-D-ribosyl)imidazole-4-carboxamide. It functions in the pathway amino-acid biosynthesis; L-histidine biosynthesis; L-histidine from 5-phospho-alpha-D-ribose 1-diphosphate: step 4/9. The protein is 1-(5-phosphoribosyl)-5-[(5-phosphoribosylamino)methylideneamino] imidazole-4-carboxamide isomerase of Paraburkholderia phytofirmans (strain DSM 17436 / LMG 22146 / PsJN) (Burkholderia phytofirmans).